Here is a 314-residue protein sequence, read N- to C-terminus: WD repeat domain-containing protein 83 (314 aa).

WD repeat units lie at residues 23-62, 65-104, 107-146, 151-188, 189-228, 231-272, and 275-313; these read CNQGAVRAVRFNVDGNYCMTCGSDKTLKLWNPHKGTLLKT, GHGYEVLDTAGSYDNSQMCSCSSDKTVILWDVAQGQVVRK, GHAGKVNCVQFNEEATVIMSGSIDSSIRCWDCRSRRPEAI, EAKDGISSIKISDHEILAGSVDGNLRRYDLRKGEMCAD, YLGSPITCVSFSQDSQCLLASSLDSTLRLLDKDTGELLGE, GHQN…LVLK, and VGKAAVQSLSFHPSECCLLTASEGGVQLWRGASYEEEGG.

It belongs to the WD repeat MORG1 family.

It is found in the cytoplasm. Molecular scaffold protein for various multimeric protein complexes. Acts as a module in the assembly of a multicomponent scaffold for the ERK pathway, linking ERK responses to specific agonists. Also involved in response to hypoxia by acting as a negative regulator of HIF1A/HIF-1-alpha. The chain is WD repeat domain-containing protein 83 (wdr83) from Xenopus tropicalis (Western clawed frog).